The sequence spans 445 residues: N-succinylarginine dihydrolase (445 aa).

Residues 19–28 (AGLSFGNVAS), N110, and 137–138 (HR) each bind substrate. The active site involves E174. R214 is a binding site for substrate. Residue H250 is part of the active site. Residues D252 and N363 each coordinate substrate. Catalysis depends on C369, which acts as the Nucleophile.

Belongs to the succinylarginine dihydrolase family. Homodimer.

It catalyses the reaction N(2)-succinyl-L-arginine + 2 H2O + 2 H(+) = N(2)-succinyl-L-ornithine + 2 NH4(+) + CO2. Its pathway is amino-acid degradation; L-arginine degradation via AST pathway; L-glutamate and succinate from L-arginine: step 2/5. In terms of biological role, catalyzes the hydrolysis of N(2)-succinylarginine into N(2)-succinylornithine, ammonia and CO(2). The chain is N-succinylarginine dihydrolase from Shewanella pealeana (strain ATCC 700345 / ANG-SQ1).